The chain runs to 24 residues: Defensin D6 (24 aa).

Belongs to the DEFL family. Group IV subfamily. As to expression, distributed in the epidermal cell layer of leaves and in the subepidermal layer region of stems. Not in roots.

The protein localises to the secreted. Its subcellular location is the cell wall. In terms of biological role, antimicrobial peptide. Active against Fusarium spp., Gram-positive and Gram-negative bacterial pathogens. This chain is Defensin D6, found in Spinacia oleracea (Spinach).